The following is an 81-amino-acid chain: Prophage excisionase-like protein (81 aa).

It to lambdoid phages excisionases.

The chain is Prophage excisionase-like protein (xisE) from Escherichia coli (strain K12).